We begin with the raw amino-acid sequence, 365 residues long: DNA polymerase IV (365 aa).

The 182-residue stretch at Ile-7–Gly-188 folds into the UmuC domain. Residues Asp-11 and Asp-106 each contribute to the Mg(2+) site. The active site involves Glu-107.

It belongs to the DNA polymerase type-Y family. Monomer. Requires Mg(2+) as cofactor.

The protein resides in the cytoplasm. The catalysed reaction is DNA(n) + a 2'-deoxyribonucleoside 5'-triphosphate = DNA(n+1) + diphosphate. Poorly processive, error-prone DNA polymerase involved in untargeted mutagenesis. Copies undamaged DNA at stalled replication forks, which arise in vivo from mismatched or misaligned primer ends. These misaligned primers can be extended by PolIV. Exhibits no 3'-5' exonuclease (proofreading) activity. May be involved in translesional synthesis, in conjunction with the beta clamp from PolIII. The protein is DNA polymerase IV of Clostridioides difficile (strain 630) (Peptoclostridium difficile).